A 466-amino-acid chain; its full sequence is Pyruvate kinase (466 aa).

A substrate-binding site is contributed by R32. Positions 34, 36, and 66 each coordinate K(+). Residue 34–37 (NTSH) participates in ATP binding. An ATP-binding site is contributed by R73. E219 is a binding site for Mg(2+). Substrate is bound by residues G242, D243, and T275. D243 is a Mg(2+) binding site.

It belongs to the pyruvate kinase family. As to quaternary structure, homotetramer. The cofactor is a divalent metal cation.

The enzyme catalyses pyruvate + ATP = phosphoenolpyruvate + ADP + H(+). It functions in the pathway carbohydrate degradation; glycolysis; pyruvate from D-glyceraldehyde 3-phosphate: step 5/5. Its activity is regulated as follows. Allosterically activated by AMP and inhibited by ATP. The sequence is that of Pyruvate kinase (pyk) from Thermotoga maritima (strain ATCC 43589 / DSM 3109 / JCM 10099 / NBRC 100826 / MSB8).